A 228-amino-acid chain; its full sequence is ATP-dependent dethiobiotin synthetase BioD (228 aa).

Position 14 to 19 (14 to 19 (DAGKTL)) interacts with ATP. Residue Thr-18 participates in Mg(2+) binding. Lys-39 is a catalytic residue. ATP is bound by residues Asp-56, 117–120 (EGAG), and 206–208 (PRL). Mg(2+) is bound by residues Asp-56 and Glu-117.

Belongs to the dethiobiotin synthetase family. Homodimer. The cofactor is Mg(2+).

It localises to the cytoplasm. It catalyses the reaction (7R,8S)-7,8-diammoniononanoate + CO2 + ATP = (4R,5S)-dethiobiotin + ADP + phosphate + 3 H(+). The protein operates within cofactor biosynthesis; biotin biosynthesis; biotin from 7,8-diaminononanoate: step 1/2. Catalyzes a mechanistically unusual reaction, the ATP-dependent insertion of CO2 between the N7 and N8 nitrogen atoms of 7,8-diaminopelargonic acid (DAPA, also called 7,8-diammoniononanoate) to form a ureido ring. The protein is ATP-dependent dethiobiotin synthetase BioD of Cellvibrio japonicus (strain Ueda107) (Pseudomonas fluorescens subsp. cellulosa).